Consider the following 293-residue polypeptide: 4-hydroxy-tetrahydrodipicolinate synthase (293 aa).

T47 contributes to the pyruvate binding site. The Proton donor/acceptor role is filled by Y135. The active-site Schiff-base intermediate with substrate is the K164. A pyruvate-binding site is contributed by I205.

It belongs to the DapA family. Homotetramer; dimer of dimers.

Its subcellular location is the cytoplasm. The catalysed reaction is L-aspartate 4-semialdehyde + pyruvate = (2S,4S)-4-hydroxy-2,3,4,5-tetrahydrodipicolinate + H2O + H(+). The protein operates within amino-acid biosynthesis; L-lysine biosynthesis via DAP pathway; (S)-tetrahydrodipicolinate from L-aspartate: step 3/4. Its function is as follows. Catalyzes the condensation of (S)-aspartate-beta-semialdehyde [(S)-ASA] and pyruvate to 4-hydroxy-tetrahydrodipicolinate (HTPA). This is 4-hydroxy-tetrahydrodipicolinate synthase from Symbiobacterium thermophilum (strain DSM 24528 / JCM 14929 / IAM 14863 / T).